The following is a 623-amino-acid chain: MAKIIGIDLGTTNSCVSVMEGGEPVVIPNAEGSRTTPSVVSFQANGERLIGQVAKRQAITNPEKTIISIKRYMGTDHKVNIDSTEYTPQQISAMVLQKLKADAEAYLGEKVTQAVITVPAYFNDSQRQATKDAGKIAGLEVLRIINEPTAASLAYGLDKMDTNEKILVYDLGGGTFDVSILELGDGVFEVKATNGDTKLGGDDFDQKLIDYIAETFKAENGIDLRNDKMAIQRLKEAAEKAKIELSSATQTNINLPFITADATGPKHIDMNLTRAKFNELTHDLVQRTLEPIKKSLEGSGYAMSDIDKIIMVGGSTRIPAVQDAVKDFTGKELSKGVNPDEVVAMGAAIQAGVLTGEVKDVLLLDVTPLTLGIETFGGVSTTLIEKNTTIPTRKSQVFSTAADGQTSVEIHVVQGERSMAADNKTLGRFTLSGIAPAPRGIPQIEVTFDIDANGIVNVSAKDKGTGKEANITITASTNLTDDEIEKAVNEAKKFEAEDKKRKESIEVKNNADQIVYQTEKTLTDLGDKVSAEDKAQIEEKVKAVKDVKEGEDLEAIKKATEDLTQTFYGISSKIYQQANPEGAQGAGFDPNNMGGANAGNASAENDKKDDNVVDADYKVEDDK.

Threonine 175 is subject to Phosphothreonine; by autocatalysis. Residues proline 580 to lysine 623 form a disordered region. The segment covering asparagine 591 to alanine 603 has biased composition (low complexity). A compositionally biased stretch (basic and acidic residues) spans glutamate 604–lysine 623.

This sequence belongs to the heat shock protein 70 family.

Its function is as follows. Acts as a chaperone. The sequence is that of Chaperone protein DnaK from Clostridium botulinum (strain Okra / Type B1).